A 624-amino-acid polypeptide reads, in one-letter code: Probable potassium transport system protein Kup 1 (624 aa).

12 helical membrane-spanning segments follow: residues 10-30, 48-68, 94-114, 133-153, 159-179, 210-230, 242-262, 270-290, 331-351, 363-383, 388-408, and 413-433; these read LALGALGIVFGDIGTSPLYAL, LSLIFWSLIIVVSFKYLMIIF, PVFYIVAIFGAGLLLGDGMLT, LYPYVLPIASLILVLLFSLQA, IGYLFGPLILIWFITIAILGI, FLLGGIFLVVTGGEALFADIG, FFIALPCLLLNYFGQGANLIV, PFFMIAPPWFYLPLIIIATVA, IYVPQINFILFIGTMAFCLAF, IAVNLEMLLVDAMVAYAAVSI, TFNVIFLFGLFLLIDLAFLGA, and FITGGWVPIVLAFFIAFIMYS.

The protein belongs to the HAK/KUP transporter (TC 2.A.72) family.

The protein resides in the cell inner membrane. It carries out the reaction K(+)(in) + H(+)(in) = K(+)(out) + H(+)(out). Transport of potassium into the cell. Likely operates as a K(+):H(+) symporter. The chain is Probable potassium transport system protein Kup 1 from Legionella pneumophila (strain Paris).